The sequence spans 564 residues: O-fucosyltransferase 5 (564 aa).

The interval 1–28 (MVRNSSDEEEDHRNLIPQNDTRDNDLNL) is disordered. Residues 70–90 (YVVAAVSLTLFVGLLFLFTDT) form a helical; Signal-anchor for type II membrane protein membrane-spanning segment. 3 N-linked (GlcNAc...) asparagine glycosylation sites follow: asparagine 129, asparagine 134, and asparagine 174. Substrate contacts are provided by residues 413–415 (HLR) and 529–530 (TF).

It belongs to the glycosyltransferase GT106 family.

The protein localises to the membrane. The protein operates within glycan metabolism. This chain is O-fucosyltransferase 5, found in Arabidopsis thaliana (Mouse-ear cress).